Consider the following 69-residue polypeptide: Amphipathic peptide Hp1404 (69 aa).

A signal peptide spans 1-23 (MKTQFAILMITVVLMQMLVQTEG). Phenylalanine 37 is subject to Phenylalanine amide. Residues 41–69 (GLKNLDQLDDSFDSDLSDADVKLLREMFK) constitute a propeptide that is removed on maturation.

Belongs to the non-disulfide-bridged peptide (NDBP) superfamily. Short antimicrobial peptide (group 4) family. Expressed by the venom gland.

It localises to the secreted. The protein resides in the target cell membrane. Its activity is regulated as follows. Antibacterial activity is decreased by serum. Its function is as follows. Antimicrobial peptide that acts by inducing concentration-dependent membrane disruption, implying a membrane-lytic mode of action. Acts with potent activity against Gram-positive bacteria (MIC=4.04-16.16 uM) including methicillin-resistant S.aureus (MRSA). Its activity on Gram-negative bacteria is controversial. Li and colleagues (2014) describe no activity towards E.coli and P.aeruginosa, while Kim and colleagues (2018) describe a potent activity towards P.aeruginosa (MIC=3.13-12.5 uM), and Luo and colleagues (2021) describe a potent activity against antibiotic-sensitive and -resistant Acinetobacter baumannii strains (MIC=3.2-10 uM). On S.aureus, possibly acts by impairing an unknown intracellular target and/or by interacting with the membrane, leading to the lateral expansion of the membrane area at high MIC concentrations, resulting in the formation of mesosome-like structures that leads to cell lysis. Shows moderate inhibition of P.aeruginosa biofilm formation. Administration of this peptide at sub-MIC concentrations in multiple treatments does not lead to resistance in S.aureus. Exhibits low toxicity and hemolytic activity against mammalian cell lines and BALB/c mice. In vivo, improves the survival rate of the MRSA infected BALB/c mice in the peritonitis model. The sequence is that of Amphipathic peptide Hp1404 from Heterometrus petersii (Asian forest scorpion).